Consider the following 235-residue polypeptide: uncharacterized protein (235 aa).

Positions 82 to 221 (LAFKKFPPDP…DTGELIRESP (140 aa)) constitute an N-acetyltransferase domain.

The protein belongs to the acetyltransferase family.

The protein resides in the golgi apparatus membrane. It is found in the endoplasmic reticulum membrane. This is an uncharacterized protein from Schizosaccharomyces pombe (strain 972 / ATCC 24843) (Fission yeast).